Here is a 325-residue protein sequence, read N- to C-terminus: Replication factor C small subunit (325 aa).

Residue 52-59 (GPAGVGKT) coordinates ATP.

The protein belongs to the activator 1 small subunits family. RfcS subfamily. As to quaternary structure, heteromultimer composed of small subunits (RfcS) and large subunits (RfcL).

Functionally, part of the RFC clamp loader complex which loads the PCNA sliding clamp onto DNA. The polypeptide is Replication factor C small subunit (Natronomonas pharaonis (strain ATCC 35678 / DSM 2160 / CIP 103997 / JCM 8858 / NBRC 14720 / NCIMB 2260 / Gabara) (Halobacterium pharaonis)).